A 3108-amino-acid chain; its full sequence is Probable polyketide synthase 39 (3108 aa).

Positions 9-440 constitute a Ketosynthase family 3 (KS3) domain; the sequence is DDDVAVIGIG…GSNVCLILSE (432 aa). Active-site for beta-ketoacyl synthase activity residues include cysteine 181, histidine 320, and histidine 363. The tract at residues 643–676 is acyl/malonyl transferase; it reads GVSADIIIGHSLGEISSAYCSGMIDFQTLCYLTY. Serine 653 (for acyl/malonyl transferase activity) is an active-site residue. The N-terminal hotdog fold stretch occupies residues 939–1068; it reads HEKIKSEGPS…GNFSLFKHNI (130 aa). A PKS/mFAS DH domain is found at 939 to 1265; that stretch reads HEKIKSEGPS…CTIAASNPDS (327 aa). The Proton acceptor; for dehydratase activity role is filled by histidine 980. Residues 1085-1265 are C-terminal hotdog fold; sequence NFTSISKQDL…CTIAASNPDS (181 aa). Aspartate 1157 (proton donor; for dehydratase activity) is an active-site residue. A disordered region spans residues 1375-1435; that stretch reads NNNNNNNNNN…NNNNNNNNNN (61 aa). A Carrier domain is found at 2566-2643; sequence GNNEIIHSTI…QSIEIIKSAL (78 aa). Position 2603 is an O-(pantetheine 4'-phosphoryl)serine (serine 2603). Residues 2702–2722 form a helical membrane-spanning segment; sequence IFLTGSTGFLGAYLLMELIKM.

It depends on pantetheine 4'-phosphate as a cofactor.

Its subcellular location is the membrane. Its function is as follows. Probable polyketide synthase. This is Probable polyketide synthase 39 (pks39) from Dictyostelium discoideum (Social amoeba).